The primary structure comprises 323 residues: HPr kinase/phosphorylase (323 aa).

Residues histidine 146 and lysine 167 contribute to the active site. Residue 161-168 participates in ATP binding; sequence GESGLGKS. Serine 168 contacts Mg(2+). The Proton acceptor; for phosphorylation activity. Proton donor; for dephosphorylation activity role is filled by aspartate 185. Positions 209 to 218 are important for the catalytic mechanism of both phosphorylation and dephosphorylation; the sequence is LEVRGLGLLD. Glutamate 210 serves as a coordination point for Mg(2+). The active site involves arginine 250. Positions 271-276 are important for the catalytic mechanism of dephosphorylation; it reads QVAAGR.

The protein belongs to the HPrK/P family. As to quaternary structure, homohexamer. Mg(2+) serves as cofactor.

It carries out the reaction [HPr protein]-L-serine + ATP = [HPr protein]-O-phospho-L-serine + ADP + H(+). It catalyses the reaction [HPr protein]-O-phospho-L-serine + phosphate + H(+) = [HPr protein]-L-serine + diphosphate. In terms of biological role, catalyzes the ATP- as well as the pyrophosphate-dependent phosphorylation of a specific serine residue in HPr, a phosphocarrier protein of the phosphoenolpyruvate-dependent sugar phosphotransferase system (PTS). HprK/P also catalyzes the pyrophosphate-producing, inorganic phosphate-dependent dephosphorylation (phosphorolysis) of seryl-phosphorylated HPr (P-Ser-HPr). The sequence is that of HPr kinase/phosphorylase from Cupriavidus pinatubonensis (strain JMP 134 / LMG 1197) (Cupriavidus necator (strain JMP 134)).